Consider the following 476-residue polypeptide: Aspartyl/glutamyl-tRNA(Asn/Gln) amidotransferase subunit B 1 (476 aa).

This sequence belongs to the GatB/GatE family. GatB subfamily. Heterotrimer of A, B and C subunits.

It carries out the reaction L-glutamyl-tRNA(Gln) + L-glutamine + ATP + H2O = L-glutaminyl-tRNA(Gln) + L-glutamate + ADP + phosphate + H(+). The enzyme catalyses L-aspartyl-tRNA(Asn) + L-glutamine + ATP + H2O = L-asparaginyl-tRNA(Asn) + L-glutamate + ADP + phosphate + 2 H(+). Its function is as follows. Allows the formation of correctly charged Asn-tRNA(Asn) or Gln-tRNA(Gln) through the transamidation of misacylated Asp-tRNA(Asn) or Glu-tRNA(Gln) in organisms which lack either or both of asparaginyl-tRNA or glutaminyl-tRNA synthetases. The reaction takes place in the presence of glutamine and ATP through an activated phospho-Asp-tRNA(Asn) or phospho-Glu-tRNA(Gln). This is Aspartyl/glutamyl-tRNA(Asn/Gln) amidotransferase subunit B 1 (gatB1) from Clostridium acetobutylicum (strain ATCC 824 / DSM 792 / JCM 1419 / IAM 19013 / LMG 5710 / NBRC 13948 / NRRL B-527 / VKM B-1787 / 2291 / W).